Here is a 518-residue protein sequence, read N- to C-terminus: Putative succinate-semialdehyde dehydrogenase [NADP(+)] 2 (518 aa).

NADP(+) contacts are provided by residues 157–158, 181–184, and 232–233; these read WN, KPDS, and GS. E254 acts as the Proton acceptor in catalysis. L255 lines the NADP(+) pocket. The Nucleophile role is filled by C288. E386 is an NADP(+) binding site.

It belongs to the aldehyde dehydrogenase family.

It catalyses the reaction succinate semialdehyde + NADP(+) + H2O = succinate + NADPH + 2 H(+). Functionally, catalyzes the NADP(+)-dependent oxidation of succinate semialdehyde to succinate. Although it has succinate semialdehyde dehydrogenase activity, is likely to act physiologically on a different aldehyde(s). In Mycobacterium bovis (strain ATCC BAA-935 / AF2122/97), this protein is Putative succinate-semialdehyde dehydrogenase [NADP(+)] 2 (gabD2).